Here is a 195-residue protein sequence, read N- to C-terminus: Large ribosomal subunit protein uL18 (195 aa).

The protein belongs to the universal ribosomal protein uL18 family. Part of the 50S ribosomal subunit. Contacts the 5S and 23S rRNAs.

In terms of biological role, this is one of the proteins that bind and probably mediate the attachment of the 5S RNA into the large ribosomal subunit, where it forms part of the central protuberance. The sequence is that of Large ribosomal subunit protein uL18 from Nanoarchaeum equitans (strain Kin4-M).